Consider the following 485-residue polypeptide: MAKAKAKQEPQQQRQTLQATYRFVLFFIAGSLAAFAFHALTSSTGSLMGWRLRLHHLPTAHYLQTRDEFAVYSVDELNAFKEFYDKSISDSVGASFTEAEQTNIKEAMGALRLAQEMYMAGKDDKAARLFEHALALAPKHPEVLLRYGEFLEHNQRNIVLADQYYFQALCISPSNSEALANRQRTADVVQTLDERRLISLDEKRDALSAIHEANSALRRAKKEAYFQHIYHSVGIEGNTMTLAQTRSVLETRMAVDGKSIDEHNEILGMDLAMKYINASLVQKLEITLKDILELHRRVLGHVDPIEGGEFRRNQVYVGGHVPPGPGDLAILMQRFEHWLNSEHSSSLHPVNYAALAHYKLVHIHPFVDGNGRTSRLLMNTLLMRAGYPPVIIPKQQRSKYYHFLKLANEGDIRPFVRFIADCTEKTLDLYLWATSDLPQQIPMLIQTENEGHVLAQLQPHIAQSIPELHESGSGSGSGADPIRVP.

A helical transmembrane segment spans residues 21 to 43 (YRFVLFFIAGSLAAFAFHALTSS). 2 TPR repeats span residues 107–140 (AMGA…APKH) and 141–175 (PEVL…SPSN). The Inhibitory (S/T)XXXE(G/N) motif signature appears at 232–237 (SVGIEG). Residues Glu236 and 317–320 (VGGH) each bind ATP. The Fido domain maps to 286–421 (ITLKDILELH…IRPFVRFIAD (136 aa)). His364 is a catalytic residue. ATP-binding positions include 368 to 375 (DGNGRTSR), 400 to 401 (YY), and Asn408.

The protein belongs to the fic family. As to quaternary structure, homodimer.

The protein resides in the membrane. The catalysed reaction is L-tyrosyl-[protein] + ATP = O-(5'-adenylyl)-L-tyrosyl-[protein] + diphosphate. The enzyme catalyses L-threonyl-[protein] + ATP = 3-O-(5'-adenylyl)-L-threonyl-[protein] + diphosphate. It catalyses the reaction 3-O-(5'-adenylyl)-L-threonyl-[protein] + H2O = L-threonyl-[protein] + AMP + H(+). Its activity is regulated as follows. The side chain of Glu-236 determines which of the two opposing activities (AMPylase or de-AMPylase) will take place. In response to endoplasmic reticulum stress, mediates de-AMPylase activity. Adenylyltransferase activity is inhibited by the inhibitory helix present at the N-terminus: Glu-236 binds ATP and competes with ATP-binding at Arg-375, thereby preventing adenylyltransferase activity. In unstressed cells, disengagement of Glu-236 promotes adenylyltransferase activity. Activation dissociates ATP-binding from Glu-236, allowing ordered binding of the entire ATP moiety with the alpha-phosphate in an orientation that is productive for accepting an incoming target hydroxyl side chain. Functionally, protein that can both mediate the addition of adenosine 5'-monophosphate (AMP) to specific residues of target proteins (AMPylation), and the removal of the same modification from target proteins (de-AMPylation), depending on the context. The side chain of Glu-236 determines which of the two opposing activities (AMPylase or de-AMPylase) will take place. Acts as a key regulator of the unfolded protein response (UPR) by mediating AMPylation or de-AMPylation of Hsc70-3/BiP. In unstressed cells, acts as an adenylyltransferase by mediating AMPylation of Hsc70-3/BiP at 'Thr-518', thereby inactivating it. In response to endoplasmic reticulum stress, acts as a phosphodiesterase by mediating removal of ATP (de-AMPylation) from Hsc70-3/BiP at 'Thr-518', leading to restore HSPA5/BiP activity. The sequence is that of Protein adenylyltransferase Fic from Drosophila virilis (Fruit fly).